Here is a 287-residue protein sequence, read N- to C-terminus: Flagellin (287 aa).

Belongs to the bacterial flagellin family.

Its subcellular location is the secreted. It is found in the bacterial flagellum. Functionally, flagellin is the subunit protein which polymerizes to form the filaments of bacterial flagella. The protein is Flagellin (flaA) of Listeria innocua serovar 6a (strain ATCC BAA-680 / CLIP 11262).